A 673-amino-acid chain; its full sequence is Protein-arginine deiminase type-2 (673 aa).

An N-acetylmethionine modification is found at methionine 1. Ca(2+) is bound by residues aspartate 131, aspartate 133, aspartate 135, glutamate 139, asparagine 162, aspartate 164, aspartate 166, aspartate 174, aspartate 177, lysine 179, aspartate 185, and aspartate 188. Citrulline is present on arginine 352. Positions 362, 397, 416, 419, and 420 each coordinate Ca(2+). Residue cysteine 655 is the Nucleophile of the active site.

Belongs to the protein arginine deiminase family. Homodimer. Ca(2+) serves as cofactor. Expressed in various tissues including muscle, uterus, spinal cord, salivary gland and pancreas.

It localises to the cytoplasm. It carries out the reaction L-arginyl-[protein] + H2O = L-citrullyl-[protein] + NH4(+). Functionally, catalyzes the deimination of arginine residues of proteins. The chain is Protein-arginine deiminase type-2 (Padi2) from Mus musculus (Mouse).